Consider the following 560-residue polypeptide: Excitatory amino acid transporter 5 (560 aa).

Topologically, residues 1–16 are cytoplasmic; the sequence is MVPHAILARGRDVCRR. 3 helical membrane passes run 17–37, 60–80, and 94–114; these read NGLLILSVLSVIVGCLLGFFL, MLKMMILPLVVSSLMSGLASL, and AYYLWTTFMAVIVGIFMVSII. Over 115 to 216 the chain is Extracellular; that stretch reads HPGSAAQKET…EVVYKSEPGT (102 aa). N191 carries an N-linked (GlcNAc...) asparagine glycan. A run of 7 helical transmembrane segments spans residues 217–237, 260–280, 300–320, 330–350, 372–392, 414–434, and 457–477; these read SDGMNVLGIVFFSATMGIMLG, IVAVAVWYFPFGIVFLIAGKI, VVCGLVLHGLFILPLLYFFIT, GILQALLIALATSSSSATLPI, VGATINMDGTALYEAVAAIFI, AASIGAAGIPQAGLVTMVIVL, and FRTMINVLGDALAAGIMAHIC.

This sequence belongs to the dicarboxylate/amino acid:cation symporter (DAACS) (TC 2.A.23) family. SLC1A7 subfamily. Interacts with the PDZ domains of DLG4. As to expression, expressed primarily in retina. Detectable in liver, heart, muscle and brain.

Its subcellular location is the photoreceptor inner segment membrane. The protein localises to the synaptic cell membrane. It carries out the reaction K(+)(in) + L-glutamate(out) + 3 Na(+)(out) + H(+)(out) = K(+)(out) + L-glutamate(in) + 3 Na(+)(in) + H(+)(in). It catalyses the reaction K(+)(in) + L-aspartate(out) + 3 Na(+)(out) + H(+)(out) = K(+)(out) + L-aspartate(in) + 3 Na(+)(in) + H(+)(in). The enzyme catalyses D-aspartate(out) + K(+)(in) + 3 Na(+)(out) + H(+)(out) = D-aspartate(in) + K(+)(out) + 3 Na(+)(in) + H(+)(in). In terms of biological role, sodium-dependent, high-affinity amino acid transporter that mediates the uptake of L-glutamate and also L-aspartate and D-aspartate. Functions as a symporter that transports one amino acid molecule together with two or three Na(+) ions and one proton, in parallel with the counter-transport of one K(+) ion. Acts primarily as an inhibitory glutamate-gated chloride channel being a major inhibitory presynaptic receptor at mammalian rod bipolar cell axon terminals. Glutamate binding gates a large Cl(-) conductance that mediates inhibition, affecting visual processing in the retina. This is Excitatory amino acid transporter 5 from Homo sapiens (Human).